We begin with the raw amino-acid sequence, 493 residues long: Cobyric acid synthase (493 aa).

The GATase cobBQ-type domain maps to 252-440 (PVKIVVLRLR…IHGIFESDSL (189 aa)). Cysteine 333 serves as the catalytic Nucleophile. Histidine 432 is a catalytic residue.

Belongs to the CobB/CobQ family. CobQ subfamily.

It participates in cofactor biosynthesis; adenosylcobalamin biosynthesis. Functionally, catalyzes amidations at positions B, D, E, and G on adenosylcobyrinic A,C-diamide. NH(2) groups are provided by glutamine, and one molecule of ATP is hydrogenolyzed for each amidation. In Thermodesulfovibrio yellowstonii (strain ATCC 51303 / DSM 11347 / YP87), this protein is Cobyric acid synthase.